Reading from the N-terminus, the 305-residue chain is Mitochondrial citrate transporter D (305 aa).

Solcar repeat units lie at residues 10–101 (LPFG…WGAF), 111–197 (QTQS…VRAQ), and 211–298 (RNDL…VMDF). 6 consecutive transmembrane segments (helical) span residues 16-36 (FIAG…LDVV), 78-98 (SAPI…NDSW), 118-137 (LTGA…FELV), 176-196 (TLWR…QVRA), 208-228 (QQTR…TILN), and 270-291 (LYKG…LLVV).

Belongs to the mitochondrial carrier (TC 2.A.29) family.

The protein resides in the mitochondrion inner membrane. It catalyses the reaction citrate(in) + H(+)(in) = citrate(out) + H(+)(out). Functionally, mitochondrial transporter that mediates citrate export from mitochondria to cytoplasm. Both ctpA, ctpB, and ctpD play important roles in citric acid transport across the mitochondrial membrane and function in a redundant manner. The sequence is that of Mitochondrial citrate transporter D from Aspergillus niger (strain ATCC 1015 / CBS 113.46 / FGSC A1144 / LSHB Ac4 / NCTC 3858a / NRRL 328 / USDA 3528.7).